The primary structure comprises 819 residues: DNA topoisomerase 4 subunit A (819 aa).

The Topo IIA-type catalytic domain occupies 30-496; it reads LPDIRDGLKP…QIIEIDTASL (467 aa). Tyr118 serves as the catalytic O-(5'-phospho-DNA)-tyrosine intermediate.

Belongs to the type II topoisomerase GyrA/ParC subunit family. ParC type 2 subfamily. Heterotetramer composed of ParC and ParE.

The protein resides in the cell membrane. It carries out the reaction ATP-dependent breakage, passage and rejoining of double-stranded DNA.. Topoisomerase IV is essential for chromosome segregation. It relaxes supercoiled DNA. Performs the decatenation events required during the replication of a circular DNA molecule. The polypeptide is DNA topoisomerase 4 subunit A (Streptococcus pyogenes serotype M1).